The chain runs to 542 residues: CTP synthase (542 aa).

An amidoligase domain region spans residues 1–265 (MTRYVFITGG…DREILAHFQM (265 aa)). Residue Ser13 participates in CTP binding. Ser13 lines the UTP pocket. Residues 14 to 19 (SLGKGL) and Asp71 each bind ATP. Residues Asp71 and Glu139 each coordinate Mg(2+). CTP-binding positions include 146–148 (DIE), 186–191 (KTKPTQ), and Lys222. UTP contacts are provided by residues 186 to 191 (KTKPTQ) and Lys222. 238-240 (RDV) lines the ATP pocket. A Glutamine amidotransferase type-1 domain is found at 291 to 541 (TIAIVGKYTG…IAAAIEQSRL (251 aa)). L-glutamine is bound at residue Gly353. The active-site Nucleophile; for glutamine hydrolysis is the Cys380. L-glutamine is bound by residues 381–384 (FGMQ), Glu404, and Arg469. Residues His514 and Glu516 contribute to the active site.

Belongs to the CTP synthase family. In terms of assembly, homotetramer.

It catalyses the reaction UTP + L-glutamine + ATP + H2O = CTP + L-glutamate + ADP + phosphate + 2 H(+). The catalysed reaction is L-glutamine + H2O = L-glutamate + NH4(+). It carries out the reaction UTP + NH4(+) + ATP = CTP + ADP + phosphate + 2 H(+). It functions in the pathway pyrimidine metabolism; CTP biosynthesis via de novo pathway; CTP from UDP: step 2/2. Allosterically activated by GTP, when glutamine is the substrate; GTP has no effect on the reaction when ammonia is the substrate. The allosteric effector GTP functions by stabilizing the protein conformation that binds the tetrahedral intermediate(s) formed during glutamine hydrolysis. Inhibited by the product CTP, via allosteric rather than competitive inhibition. Its function is as follows. Catalyzes the ATP-dependent amination of UTP to CTP with either L-glutamine or ammonia as the source of nitrogen. Regulates intracellular CTP levels through interactions with the four ribonucleotide triphosphates. The protein is CTP synthase of Methylorubrum populi (strain ATCC BAA-705 / NCIMB 13946 / BJ001) (Methylobacterium populi).